The sequence spans 441 residues: MPGPKNTILIEGSFEELTDEFAQYIDTLKKSQGEEASNLQGETAELLKENKKDDVLKKLVVGAQALNQAPEKVCAIEFIAAYNLLIHLVNQSPSVNMYLPKICQNLSAPISSSPQNGGGLALSILSTIFNTTSAGSEVRYHVLLAILRVIRATSNFETLRPQLKQLDKWLEAWETEEEDSRKLYLAVSDVASDAGESEQAYTYLLRALRTYPSEEASSPEARELSLRALKSALTHPTHFDFQDLTDLDSIQALRNSDPIFFQLLEIFNSDLLDDYNDFKDEHDGWVEESGLDGAALNRKMRLLTLASMAASAGQTRSLPYDKIAKALQISSEEVEMWVIDVIRAGLVEGKLSQLNQTFLIHRSTYRVFGDNQWREVSSRLDMWRNSLTGVLQVIQAEKQRFLQEKEEEANKADNKYDSARGFQRGGQRKQPRALDDDMGLE.

Positions 196-365 (ESEQAYTYLL…QTFLIHRSTY (170 aa)) constitute a PCI domain. Basic and acidic residues predominate over residues 405–418 (KEEEANKADNKYDS). Residues 405 to 441 (KEEEANKADNKYDSARGFQRGGQRKQPRALDDDMGLE) are disordered.

The protein belongs to the eIF-3 subunit M family. As to quaternary structure, component of the eukaryotic translation initiation factor 3 (eIF-3) complex.

Its subcellular location is the cytoplasm. Functionally, component of the eukaryotic translation initiation factor 3 (eIF-3) complex, which is involved in protein synthesis of a specialized repertoire of mRNAs and, together with other initiation factors, stimulates binding of mRNA and methionyl-tRNAi to the 40S ribosome. The eIF-3 complex specifically targets and initiates translation of a subset of mRNAs involved in cell proliferation. This is Eukaryotic translation initiation factor 3 subunit M from Phaeosphaeria nodorum (strain SN15 / ATCC MYA-4574 / FGSC 10173) (Glume blotch fungus).